The chain runs to 231 residues: Somatolactin (231 aa).

Positions 1–24 (MNMMTVKQQGVWAALLWPYLLTAS) are cleaved as a signal peptide. Intrachain disulfides connect cysteine 29–cysteine 39, cysteine 89–cysteine 205, and cysteine 222–cysteine 230. A glycan (N-linked (GlcNAc...) asparagine) is linked at asparagine 145.

Belongs to the somatotropin/prolactin family. In terms of tissue distribution, pituitary gland.

It is found in the secreted. In Paralichthys olivaceus (Bastard halibut), this protein is Somatolactin.